The primary structure comprises 303 residues: Mevalonate kinase (303 aa).

90–100 (PAGSGLGSSAA) is an ATP binding site. Asp-141 serves as the catalytic Proton acceptor.

This sequence belongs to the GHMP kinase family. Mevalonate kinase subfamily. As to quaternary structure, homodimer. The cofactor is Mg(2+).

The protein localises to the cytoplasm. The enzyme catalyses (R)-mevalonate + ATP = (R)-5-phosphomevalonate + ADP + H(+). It participates in isoprenoid biosynthesis; isopentenyl diphosphate biosynthesis via mevalonate pathway; isopentenyl diphosphate from (R)-mevalonate: step 1/3. In terms of biological role, catalyzes the phosphorylation of (R)-mevalonate (MVA) to (R)-mevalonate 5-phosphate (MVAP). Functions in the mevalonate (MVA) pathway leading to isopentenyl diphosphate (IPP), a key precursor for the biosynthesis of isoprenoid compounds such as archaeal membrane lipids. This chain is Mevalonate kinase, found in Methanothermobacter thermautotrophicus (strain ATCC 29096 / DSM 1053 / JCM 10044 / NBRC 100330 / Delta H) (Methanobacterium thermoautotrophicum).